A 296-amino-acid polypeptide reads, in one-letter code: Phosphatidylglycerol--prolipoprotein diacylglyceryl transferase (296 aa).

Transmembrane regions (helical) follow at residues 17–37 (LAVR…IVVG), 59–79 (MMFY…VLFY), 97–117 (GGMS…LFAW), 129–149 (FVAP…FING), 204–224 (SQLY…FLFA), 230–250 (MGAI…TVEF), and 257–277 (FLGL…PMIL). Arginine 142 serves as a coordination point for a 1,2-diacyl-sn-glycero-3-phospho-(1'-sn-glycerol).

This sequence belongs to the Lgt family.

The protein resides in the cell inner membrane. It catalyses the reaction L-cysteinyl-[prolipoprotein] + a 1,2-diacyl-sn-glycero-3-phospho-(1'-sn-glycerol) = an S-1,2-diacyl-sn-glyceryl-L-cysteinyl-[prolipoprotein] + sn-glycerol 1-phosphate + H(+). It functions in the pathway protein modification; lipoprotein biosynthesis (diacylglyceryl transfer). Catalyzes the transfer of the diacylglyceryl group from phosphatidylglycerol to the sulfhydryl group of the N-terminal cysteine of a prolipoprotein, the first step in the formation of mature lipoproteins. This is Phosphatidylglycerol--prolipoprotein diacylglyceryl transferase from Burkholderia cenocepacia (strain HI2424).